A 914-amino-acid chain; its full sequence is Zinc finger protein 717 (914 aa).

A KRAB domain is found at 22–93; the sequence is VSFEEVAVHF…EETPNLRLSA (72 aa). A C2H2-type 1; degenerate zinc finger spans residues 209-231; sequence FQCNEQGKTFNTEAMFFIHKRVH. A C2H2-type 2; degenerate zinc finger spans residues 266–277; it reads RKSDFTKHQQTH. The segment at 283 to 305 adopts a C2H2-type 3; degenerate zinc-finger fold; it reads YECVECEKPSISKSDLMLQCKMP. 12 consecutive C2H2-type zinc fingers follow at residues 311 to 333, 339 to 361, 367 to 389, 395 to 417, 423 to 445, 451 to 473, 479 to 501, 507 to 529, 535 to 557, 563 to 585, 591 to 613, and 619 to 641; these read YACNWCEKLFSYKSSLIIHQRIH, YGCNECGKTFRRKSFLTLHERTH, YKCIECGKTFHCKSLLTLHHRTH, YQCSECGKTFSQKSYLTIHHRTH, YACDHCEEAFSHKSRLTVHQRTH, YECNECGKPFINKSNLRLHQRTH, YECNECGKTFHRKSFLTIHQWTH, YECNECGKTFRCKSFLTVHQRTH, YACNECGKTYSHKSYLTVHHRTH, YECNECGKSFHCKSFLTIHQRTH, YECNECEKTFINKLNLGIHKRTH, and YECNECGKTFRQKSNLSTHQGTH. A C2H2-type 16; degenerate zinc finger spans residues 649-669; sequence CNECGKTFHRKSFLTIHQRTH. The C2H2-type 17; degenerate zinc-finger motif lies at 741–752; the sequence is QKSVLTVHHRTH. C2H2-type zinc fingers lie at residues 758–780, 786–808, 814–836, 842–864, and 870–892; these read YECNECGKTFCHKSNLSTHQGTH, YECDECRKTFYDKTVLTIHQRTH, FECKECRKTFSQKSKLFVHHRTH, FRCNECRKTFSQKSGLSIHQRTH, and YECKECGKTFCQKSHLSRHQQTH.

Belongs to the krueppel C2H2-type zinc-finger protein family.

The protein localises to the nucleus. In terms of biological role, may be involved in transcriptional regulation. The polypeptide is Zinc finger protein 717 (Homo sapiens (Human)).